The following is a 117-amino-acid chain: METKKLIGKPLQPARPVRHLTSPPGAVFPFNFQNEYPCNTQCIQSGVSRCKTNGMQAFSQGLNEQQQQQSPVKKERIKYSRDFLLKLSSVSICRKKPDFLPDHPIVLQKPENNQSFK.

A disordered region spans residues 1–20 (METKKLIGKPLQPARPVRHL).

This is an uncharacterized protein from Homo sapiens (Human).